Reading from the N-terminus, the 214-residue chain is MDAPVLYAELHLANTQGLRCTSPPSPRQDACWGSGWHRVALKLGCVGLILLLMGLSVLVGFLVQKPPIEKCSVAVQENKTEPTVRSTILECPRDWHLHWNKCLFISQTSRPWAEGLADCSLRGATLLLIGDGKELKLLQDFSKGKGQQFFIGLKYVQEDKVWKWMNGSILNTNLLRITGKNEENSCALISHTEVFSDSCSSDNHWICQKTLKRV.

Residues 1-42 (MDAPVLYAELHLANTQGLRCTSPPSPRQDACWGSGWHRVALK) lie on the Cytoplasmic side of the membrane. A helical; Signal-anchor for type II membrane protein transmembrane segment spans residues 43-63 (LGCVGLILLLMGLSVLVGFLV). Residues 64–214 (QKPPIEKCSV…WICQKTLKRV (151 aa)) lie on the Extracellular side of the membrane. The C-type lectin domain maps to 98-208 (HWNKCLFISQ…CSSDNHWICQ (111 aa)). Intrachain disulfides connect Cys119/Cys207 and Cys186/Cys199.

It is found in the membrane. The chain is Killer cell lectin-like receptor subfamily B member 1 (Klrb1) from Rattus norvegicus (Rat).